The chain runs to 164 residues: Protein-export protein SecB (164 aa).

This sequence belongs to the SecB family. In terms of assembly, homotetramer, a dimer of dimers. One homotetramer interacts with 1 SecA dimer.

It localises to the cytoplasm. Its function is as follows. One of the proteins required for the normal export of preproteins out of the cell cytoplasm. It is a molecular chaperone that binds to a subset of precursor proteins, maintaining them in a translocation-competent state. It also specifically binds to its receptor SecA. The sequence is that of Protein-export protein SecB from Ruegeria sp. (strain TM1040) (Silicibacter sp.).